The primary structure comprises 218 residues: Octanoyltransferase (218 aa).

The BPL/LPL catalytic domain occupies 27 to 210 (AGAEETLYLL…QFRAIFADST (184 aa)). Substrate-binding positions include 72-79 (RGGNITCH), 139-141 (SIG), and 152-154 (GFA). Residue C170 is the Acyl-thioester intermediate of the active site.

The protein belongs to the LipB family.

It is found in the cytoplasm. The catalysed reaction is octanoyl-[ACP] + L-lysyl-[protein] = N(6)-octanoyl-L-lysyl-[protein] + holo-[ACP] + H(+). The protein operates within protein modification; protein lipoylation via endogenous pathway; protein N(6)-(lipoyl)lysine from octanoyl-[acyl-carrier-protein]: step 1/2. Catalyzes the transfer of endogenously produced octanoic acid from octanoyl-acyl-carrier-protein onto the lipoyl domains of lipoate-dependent enzymes. Lipoyl-ACP can also act as a substrate although octanoyl-ACP is likely to be the physiological substrate. The sequence is that of Octanoyltransferase from Nitratidesulfovibrio vulgaris (strain DSM 19637 / Miyazaki F) (Desulfovibrio vulgaris).